Consider the following 100-residue polypeptide: MVVTKAAISENLFEKLKLTKRDSKEFVEFFFEEVRKSLEKGEDVKLSGFGNFQLKNKKERPGRNPRTGENILITQRRVVIFKAGQKLKNRVEHYLMKVKY.

Belongs to the bacterial histone-like protein family. Heterodimer of an alpha and a beta chain.

In terms of biological role, this protein is one of the two subunits of integration host factor, a specific DNA-binding protein that functions in genetic recombination as well as in transcriptional and translational control. The sequence is that of Integration host factor subunit alpha from Buchnera aphidicola subsp. Schizaphis graminum (strain Sg).